Consider the following 305-residue polypeptide: Oxygen-dependent coproporphyrinogen-III oxidase (305 aa).

Serine 92 is a substrate binding site. The a divalent metal cation site is built by histidine 96 and histidine 106. The active-site Proton donor is histidine 106. Substrate is bound at residue 108-110 (NVR). Residues histidine 145 and histidine 175 each coordinate a divalent metal cation. Residues 239-274 (YVEFNLLFDRGTLFGLQSGGRAESILISLPPLVRWE) are important for dimerization. 257–259 (GGR) serves as a coordination point for substrate.

Belongs to the aerobic coproporphyrinogen-III oxidase family. In terms of assembly, homodimer. The cofactor is a divalent metal cation.

The protein localises to the cytoplasm. The catalysed reaction is coproporphyrinogen III + O2 + 2 H(+) = protoporphyrinogen IX + 2 CO2 + 2 H2O. Its pathway is porphyrin-containing compound metabolism; protoporphyrin-IX biosynthesis; protoporphyrinogen-IX from coproporphyrinogen-III (O2 route): step 1/1. Involved in the heme biosynthesis. Catalyzes the aerobic oxidative decarboxylation of propionate groups of rings A and B of coproporphyrinogen-III to yield the vinyl groups in protoporphyrinogen-IX. This Xylella fastidiosa (strain 9a5c) protein is Oxygen-dependent coproporphyrinogen-III oxidase.